We begin with the raw amino-acid sequence, 124 residues long: UPF0292 protein AF_0905 (124 aa).

Positions 21–98 (GWVVVVEGKK…IPDVEIKRKI (78 aa)) constitute a Toprim domain. Mg(2+)-binding residues include Glu27, Asp67, and Asp69.

Belongs to the UPF0292 family. Mg(2+) serves as cofactor.

The sequence is that of UPF0292 protein AF_0905 from Archaeoglobus fulgidus (strain ATCC 49558 / DSM 4304 / JCM 9628 / NBRC 100126 / VC-16).